A 282-amino-acid chain; its full sequence is HTH-type transcriptional activator RhaR (282 aa).

One can recognise an HTH araC/xylS-type domain in the interval 179–277; the sequence is DKLITRLAAS…GMTPSQWRHL (99 aa). DNA-binding regions (H-T-H motif) lie at residues 196–217 and 244–267; these read DKFC…RQQT and ISDI…TRET.

As to quaternary structure, binds DNA as a dimer.

The protein localises to the cytoplasm. In terms of biological role, activates expression of the rhaSR operon in response to L-rhamnose. This Escherichia coli O139:H28 (strain E24377A / ETEC) protein is HTH-type transcriptional activator RhaR.